A 38-amino-acid chain; its full sequence is Bacteriocin curvaticin FS47 (38 aa).

It is found in the secreted. Bacteriocin active against Listeria monocytogenes, Pediococcus, Enterococcus, Lactobacilli and Bacilli. The sequence is that of Bacteriocin curvaticin FS47 from Latilactobacillus curvatus (Lactobacillus curvatus).